A 449-amino-acid chain; its full sequence is Glutamyl-tRNA reductase (449 aa).

Substrate contacts are provided by residues 58–61, Ser-121, 126–128, and Gln-132; these read TCNR and ETQ. Residue Cys-59 is the Nucleophile of the active site. NADP(+) is bound at residue 203 to 208; the sequence is GLGEMA.

The protein belongs to the glutamyl-tRNA reductase family. Homodimer.

The enzyme catalyses (S)-4-amino-5-oxopentanoate + tRNA(Glu) + NADP(+) = L-glutamyl-tRNA(Glu) + NADPH + H(+). Its pathway is porphyrin-containing compound metabolism; protoporphyrin-IX biosynthesis; 5-aminolevulinate from L-glutamyl-tRNA(Glu): step 1/2. Functionally, catalyzes the NADPH-dependent reduction of glutamyl-tRNA(Glu) to glutamate 1-semialdehyde (GSA). In Helicobacter pylori (strain ATCC 700392 / 26695) (Campylobacter pylori), this protein is Glutamyl-tRNA reductase.